The primary structure comprises 312 residues: Pyridoxal kinase (312 aa).

Met1 is modified (N-acetylmethionine). Pyridoxal 5'-phosphate is bound by residues Ser12 and Thr47. Pyridoxamine-binding residues include Ser12 and Thr47. Ser59 bears the Phosphoserine mark. Asp113 provides a ligand contact to K(+). Tyr127 contributes to the pyridoxal 5'-phosphate binding site. Residue Thr148 participates in K(+) binding. Asn150 contributes to the ADP binding site. Asn150 is a binding site for ATP. At Ser164 the chain carries Phosphoserine. Residue Thr186 coordinates K(+). Residue Thr186–Ser187 participates in ADP binding. Thr186–Ser187 contributes to the ATP binding site. A Phosphoserine modification is found at Ser213. ADP contacts are provided by residues Met223–Val226 and Thr233–Gly234. Residues Met223–Val226 and Thr233–Gly234 each bind ATP. Residue Gly232–Asp235 participates in pyridoxal 5'-phosphate binding. Asp235 serves as a coordination point for pyridoxamine. The active-site Proton acceptor is the Asp235. At Ser285 the chain carries Phosphoserine.

It belongs to the pyridoxine kinase family. Homodimer. Zn(2+) is required as a cofactor. Mg(2+) serves as cofactor. Ubiquitous.

Its subcellular location is the cytoplasm. It localises to the cytosol. The catalysed reaction is pyridoxal + ATP = pyridoxal 5'-phosphate + ADP + H(+). The enzyme catalyses pyridoxamine + ATP = pyridoxamine 5'-phosphate + ADP + H(+). It carries out the reaction pyridoxine + ATP = pyridoxine 5'-phosphate + ADP + H(+). The protein operates within cofactor metabolism; pyridoxal 5'-phosphate salvage; pyridoxal 5'-phosphate from pyridoxal: step 1/1. It participates in cofactor metabolism; pyridoxal 5'-phosphate salvage; pyridoxine 5'-phosphate from pyridoxine: step 1/1. Its pathway is cofactor metabolism; pyridoxal 5'-phosphate salvage; pyridoxamine 5'-phosphate from pyridoxamine: step 1/1. With respect to regulation, activated by K(+). Activity is increased in the presence of Na(+). Its function is as follows. Catalyzes the phosphorylation of the dietary vitamin B6 vitamers pyridoxal (PL), pyridoxine (PN) and pyridoxamine (PM) to form pyridoxal 5'-phosphate (PLP), pyridoxine 5'-phosphate (PNP) and pyridoxamine 5'-phosphate (PMP), respectively. PLP is the active form of vitamin B6, and acts as a cofactor for over 140 different enzymatic reactions. This Ovis aries (Sheep) protein is Pyridoxal kinase (PDXK).